The following is a 142-amino-acid chain: Putative pterin-4-alpha-carbinolamine dehydratase (142 aa).

Belongs to the pterin-4-alpha-carbinolamine dehydratase family.

It carries out the reaction (4aS,6R)-4a-hydroxy-L-erythro-5,6,7,8-tetrahydrobiopterin = (6R)-L-erythro-6,7-dihydrobiopterin + H2O. This chain is Putative pterin-4-alpha-carbinolamine dehydratase (pcbd-1), found in Caenorhabditis elegans.